The sequence spans 273 residues: Ribosomal RNA small subunit methyltransferase I (273 aa).

This sequence belongs to the methyltransferase superfamily. RsmI family.

It localises to the cytoplasm. The catalysed reaction is cytidine(1402) in 16S rRNA + S-adenosyl-L-methionine = 2'-O-methylcytidine(1402) in 16S rRNA + S-adenosyl-L-homocysteine + H(+). Catalyzes the 2'-O-methylation of the ribose of cytidine 1402 (C1402) in 16S rRNA. The polypeptide is Ribosomal RNA small subunit methyltransferase I (Xylella fastidiosa (strain 9a5c)).